A 109-amino-acid chain; its full sequence is Putative membrane protein insertion efficiency factor (109 aa).

This sequence belongs to the UPF0161 family.

The protein localises to the cell inner membrane. Functionally, could be involved in insertion of integral membrane proteins into the membrane. The polypeptide is Putative membrane protein insertion efficiency factor (Rhodopseudomonas palustris (strain BisA53)).